Reading from the N-terminus, the 230-residue chain is 3-beta-hydroxysteroid-Delta(8),Delta(7)-isomerase (230 aa).

T2 bears the N-acetylthreonine mark. Transmembrane regions (helical) follow at residues 29–49 (SHIL…TWLL), 66–86 (LCWF…FSLY), 121–141 (METV…IAFL), and 185–205 (FWFY…ILVL). An EXPERA domain is found at 61 to 204 (GRRLALCWFA…VWLVIPSILV (144 aa)).

It belongs to the EBP family.

Its subcellular location is the endoplasmic reticulum membrane. It is found in the nucleus envelope. The protein localises to the cytoplasmic vesicle. It carries out the reaction lathosterol = 5alpha-cholest-8-en-3beta-ol. The catalysed reaction is zymosterol = 5alpha-cholesta-7,24-dien-3beta-ol. The enzyme catalyses 5,6alpha-epoxy-5alpha-cholestan-3beta-ol + H2O = 5alpha-cholestane-3beta,5,6beta-triol. It catalyses the reaction 5,6beta-epoxy-5beta-cholestan-3beta-ol + H2O = 5alpha-cholestane-3beta,5,6beta-triol. It functions in the pathway steroid biosynthesis; cholesterol biosynthesis. Isomerase that catalyzes the conversion of Delta(8)-sterols to their corresponding Delta(7)-isomers. In terms of biological role, component of the microsomal antiestrogen binding site (AEBS), a multiproteic complex at the ER membrane that consists of an association between EBP and 7-dehydrocholesterol reductase/DHCR7. This complex is responsible for cholesterol-5,6-epoxide hydrolase (ChEH) activity, which consists in the hydration of cholesterol-5,6-epoxides (5,6-EC) into cholestane-3beta,5alpha,6beta-triol (CT). The precise role of each component of this complex has not been described yet. The sequence is that of 3-beta-hydroxysteroid-Delta(8),Delta(7)-isomerase from Mus musculus (Mouse).